A 552-amino-acid chain; its full sequence is Glutamine--tRNA ligase (552 aa).

The short motif at 34 to 44 (PEPNGYLHIGH) is the 'HIGH' region element. ATP contacts are provided by residues 35 to 37 (EPN) and 41 to 47 (HIGHAKS). L-glutamine contacts are provided by Asp67 and Tyr212. ATP contacts are provided by residues Thr231, 261–262 (RL), and 269–271 (MSK). Positions 268–272 (IMSKR) match the 'KMSKS' region motif.

This sequence belongs to the class-I aminoacyl-tRNA synthetase family. Monomer.

It localises to the cytoplasm. The enzyme catalyses tRNA(Gln) + L-glutamine + ATP = L-glutaminyl-tRNA(Gln) + AMP + diphosphate. This Aliivibrio salmonicida (strain LFI1238) (Vibrio salmonicida (strain LFI1238)) protein is Glutamine--tRNA ligase.